A 216-amino-acid chain; its full sequence is Cyclic AMP receptor protein (216 aa).

6-126 provides a ligand contact to a nucleoside 3',5'-cyclic phosphate; it reads LFHGLAPEEV…HNLAALLARR (121 aa). 3',5'-cyclic AMP is bound by residues 75–78 and 85–86; these read GEMS and RS. In terms of domain architecture, HTH crp-type spans 140–206; sequence EEARNRVAYA…PGTVEVREAA (67 aa). Residues 166–185 constitute a DNA-binding region (H-T-H motif); the sequence is HHELAALAGTSRETVSRVLH.

As to quaternary structure, homodimer.

Functionally, activates transcription. Positively regulates six promoters upstream of the TTHB186, TTHB147, TTHB178, TTHB159, TTHA0771 and TTHA0176 genes in a cAMP-dependent manner. Regulated genes include clustered regularly interspaced short palindromic repeat (CRISPR) associated (Cas) genes, and the genes encoding a putative transcriptional regulator, a protein containing the exonuclease III-like domain of DNA polymerase, a GCN5-related acetyltransferase homolog, and some T.thermophilus-specific proteins of unknown function. The consensus DNA-binding site of this transcriptional regulator is 5'-(CT)NNG(G/T)(G/T)C(A/C)N(A/T)NNTCACAN(G/C)(G/C)-3' in which N is G, A, T or C. In Thermus thermophilus (strain ATCC 27634 / DSM 579 / HB8), this protein is Cyclic AMP receptor protein.